Reading from the N-terminus, the 168-residue chain is Large ribosomal subunit protein uL10 (168 aa).

This sequence belongs to the universal ribosomal protein uL10 family. As to quaternary structure, part of the ribosomal stalk of the 50S ribosomal subunit. The N-terminus interacts with L11 and the large rRNA to form the base of the stalk. The C-terminus forms an elongated spine to which L12 dimers bind in a sequential fashion forming a multimeric L10(L12)X complex.

Its function is as follows. Forms part of the ribosomal stalk, playing a central role in the interaction of the ribosome with GTP-bound translation factors. The chain is Large ribosomal subunit protein uL10 from Photorhabdus laumondii subsp. laumondii (strain DSM 15139 / CIP 105565 / TT01) (Photorhabdus luminescens subsp. laumondii).